The sequence spans 157 residues: Transcription elongation factor GreA (157 aa).

This sequence belongs to the GreA/GreB family.

Its function is as follows. Necessary for efficient RNA polymerase transcription elongation past template-encoded arresting sites. The arresting sites in DNA have the property of trapping a certain fraction of elongating RNA polymerases that pass through, resulting in locked ternary complexes. Cleavage of the nascent transcript by cleavage factors such as GreA or GreB allows the resumption of elongation from the new 3'terminus. GreA releases sequences of 2 to 3 nucleotides. This Chelativorans sp. (strain BNC1) protein is Transcription elongation factor GreA.